The sequence spans 642 residues: 1-deoxy-D-xylulose-5-phosphate synthase (642 aa).

Residues histidine 73 and 114 to 116 (SHA) contribute to the thiamine diphosphate site. Aspartate 145 is a Mg(2+) binding site. Residues 146–147 (GA), asparagine 175, phenylalanine 286, and glutamate 367 contribute to the thiamine diphosphate site. Residue asparagine 175 participates in Mg(2+) binding.

The protein belongs to the transketolase family. DXPS subfamily. In terms of assembly, homodimer. It depends on Mg(2+) as a cofactor. The cofactor is thiamine diphosphate.

The catalysed reaction is D-glyceraldehyde 3-phosphate + pyruvate + H(+) = 1-deoxy-D-xylulose 5-phosphate + CO2. The protein operates within metabolic intermediate biosynthesis; 1-deoxy-D-xylulose 5-phosphate biosynthesis; 1-deoxy-D-xylulose 5-phosphate from D-glyceraldehyde 3-phosphate and pyruvate: step 1/1. Its function is as follows. Catalyzes the acyloin condensation reaction between C atoms 2 and 3 of pyruvate and glyceraldehyde 3-phosphate to yield 1-deoxy-D-xylulose-5-phosphate (DXP). This chain is 1-deoxy-D-xylulose-5-phosphate synthase, found in Saccharopolyspora erythraea (strain ATCC 11635 / DSM 40517 / JCM 4748 / NBRC 13426 / NCIMB 8594 / NRRL 2338).